We begin with the raw amino-acid sequence, 84 residues long: LYR motif-containing protein 5B (84 aa).

This sequence belongs to the complex I LYR family.

The protein is LYR motif-containing protein 5B (lyrm5b) of Danio rerio (Zebrafish).